A 103-amino-acid polypeptide reads, in one-letter code: MSTTIKYEMMILLTEEFNDNELKTWAFNYAKALRKLNASEISVISRGKRDLSYEIANQKRGNFIQISFSSIPKYIENFSSSLKFDSNVLRFLVLNKTNNVKKF.

It belongs to the bacterial ribosomal protein bS6 family.

It localises to the plastid. It is found in the chloroplast. Its function is as follows. Binds together with bS18 to 16S ribosomal RNA. The sequence is that of Small ribosomal subunit protein bS6c from Thalassiosira pseudonana (Marine diatom).